Here is a 452-residue protein sequence, read N- to C-terminus: Sensor histidine kinase HprS (452 aa).

Over 1-9 (MKRLSITVR) the chain is Cytoplasmic. Residues 10 to 30 (LTLLFILLLSVAGAGIVWTLY) traverse the membrane as a helical segment. Over 31 to 158 (NGLASELKWR…ARHNMLEQYK (128 aa)) the chain is Periplasmic. A helical transmembrane segment spans residues 159–179 (INSIIICIVAIVLCSVLSPLL). The Cytoplasmic segment spans residues 180 to 452 (IRTGLREIKK…VFRITLPQRN (273 aa)). An HAMP domain is found at 181–234 (RTGLREIKKLSGVTEALNYNDSREPVEVSALPRELKPLGQALNKMHHALVKDFE). Residues 242–452 (DLAHELRTPI…VFRITLPQRN (211 aa)) enclose the Histidine kinase domain. Histidine 245 bears the Phosphohistidine; by autocatalysis mark.

Post-translationally, autophosphorylated.

The protein resides in the cell inner membrane. The catalysed reaction is ATP + protein L-histidine = ADP + protein N-phospho-L-histidine.. Its function is as follows. Member of a two-component regulatory system HprR/HprS involved in response to hydrogen peroxide. Senses H(2)O(2), maybe via the redox state of the membrane. Activates HprR by phosphorylation. Can also phosphorylate CusR. The chain is Sensor histidine kinase HprS from Escherichia coli (strain K12).